A 273-amino-acid chain; its full sequence is Proteasome subunit beta type-7-A (273 aa).

Residues M1–K37 constitute a propeptide, removed in mature form. T40 functions as the Nucleophile in the catalytic mechanism.

This sequence belongs to the peptidase T1B family. In terms of assembly, component of the 20S core complex of the 26S proteasome. The 26S proteasome is composed of a core protease (CP), known as the 20S proteasome, capped at one or both ends by the 19S regulatory particle (RP/PA700). The 20S proteasome core is composed of 28 subunits that are arranged in four stacked rings, resulting in a barrel-shaped structure. The two end rings are each formed by seven alpha subunits, and the two central rings are each formed by seven beta subunits. The catalytic chamber with the active sites is on the inside of the barrel.

The protein resides in the cytoplasm. Its subcellular location is the nucleus. The catalysed reaction is Cleavage of peptide bonds with very broad specificity.. Functionally, the proteasome is a multicatalytic proteinase complex which is characterized by its ability to cleave peptides with Arg, Phe, Tyr, Leu, and Glu adjacent to the leaving group at neutral or slightly basic pH. The proteasome has an ATP-dependent proteolytic activity. In Arabidopsis thaliana (Mouse-ear cress), this protein is Proteasome subunit beta type-7-A (PBB1).